We begin with the raw amino-acid sequence, 807 residues long: Spondin-1 (807 aa).

The N-terminal stretch at 1–28 (MRLSPAPLKLSRTPALLALALPLAAALA) is a signal peptide. The region spanning 29–194 (FSDETLDKVP…DSTFDGVTDK (166 aa)) is the Reelin domain. 17 disulfides stabilise this stretch: cysteine 44-cysteine 128, cysteine 156-cysteine 182, cysteine 199-cysteine 336, cysteine 200-cysteine 340, cysteine 202-cysteine 415, cysteine 443-cysteine 480, cysteine 454-cysteine 489, cysteine 459-cysteine 494, cysteine 502-cysteine 538, cysteine 513-cysteine 517, cysteine 548-cysteine 554, cysteine 559-cysteine 595, cysteine 570-cysteine 574, cysteine 605-cysteine 610, cysteine 615-cysteine 650, cysteine 626-cysteine 630, and cysteine 660-cysteine 665. The Spondin domain maps to 195 to 388 (PILDCCACGT…LTSLDHPQSP (194 aa)). A glycan (N-linked (GlcNAc...) asparagine) is linked at asparagine 214. 3 residues coordinate Ca(2+): aspartate 325, aspartate 354, and aspartate 358. TSP type-1 domains are found at residues 442–495 (TCIY…PGCS), 501–555 (TCTM…EECS), 558–611 (SCLM…PECH), 614–666 (PCLL…PECP), 668–721 (DCEL…RKCL), and 754–806 (GCRM…NVHP). Residue tryptophan 448 is glycosylated (C-linked (Man) tryptophan). Tryptophan 451 carries C-linked (Man) tryptophan; partial glycosylation. C-linked (Man) tryptophan glycosylation occurs at tryptophan 507. A C-linked (Man) tryptophan; partial glycan is attached at tryptophan 510. A C-linked (Man) tryptophan glycan is attached at tryptophan 564. C-linked (Man) tryptophan; partial glycosylation occurs at tryptophan 620. Tryptophan 623 carries C-linked (Man) tryptophan glycosylation. C-linked (Man) tryptophan glycosylation occurs at tryptophan 674. An N-linked (GlcNAc...) asparagine glycan is attached at asparagine 681.

Binds to the central extracellular domain of APP and inhibits beta-secretase cleavage of APP. As to expression, highest expression in lung, lower expression in brain, heart, kidney, liver and testis, and lowest expression in pancreas, skeletal muscle and ovary. Not expressed in spleen.

Its subcellular location is the secreted. It is found in the extracellular space. The protein resides in the extracellular matrix. Its function is as follows. Cell adhesion protein that promotes the attachment of spinal cord and sensory neuron cells and the outgrowth of neurites in vitro. May contribute to the growth and guidance of axons in both the spinal cord and the PNS. Major factor for vascular smooth muscle cell. This chain is Spondin-1 (SPON1), found in Homo sapiens (Human).